Reading from the N-terminus, the 234-residue chain is Leucyl/phenylalanyl-tRNA--protein transferase (234 aa).

Belongs to the L/F-transferase family.

It is found in the cytoplasm. The enzyme catalyses N-terminal L-lysyl-[protein] + L-leucyl-tRNA(Leu) = N-terminal L-leucyl-L-lysyl-[protein] + tRNA(Leu) + H(+). The catalysed reaction is N-terminal L-arginyl-[protein] + L-leucyl-tRNA(Leu) = N-terminal L-leucyl-L-arginyl-[protein] + tRNA(Leu) + H(+). It catalyses the reaction L-phenylalanyl-tRNA(Phe) + an N-terminal L-alpha-aminoacyl-[protein] = an N-terminal L-phenylalanyl-L-alpha-aminoacyl-[protein] + tRNA(Phe). Its function is as follows. Functions in the N-end rule pathway of protein degradation where it conjugates Leu, Phe and, less efficiently, Met from aminoacyl-tRNAs to the N-termini of proteins containing an N-terminal arginine or lysine. The chain is Leucyl/phenylalanyl-tRNA--protein transferase from Shigella boydii serotype 18 (strain CDC 3083-94 / BS512).